The primary structure comprises 78 residues: Large ribosomal subunit protein bL28 (78 aa).

This sequence belongs to the bacterial ribosomal protein bL28 family.

This is Large ribosomal subunit protein bL28 from Synechococcus sp. (strain CC9605).